Consider the following 281-residue polypeptide: 2-dehydro-3-deoxyphosphooctonate aldolase (281 aa).

The protein belongs to the KdsA family.

It localises to the cytoplasm. The catalysed reaction is D-arabinose 5-phosphate + phosphoenolpyruvate + H2O = 3-deoxy-alpha-D-manno-2-octulosonate-8-phosphate + phosphate. It participates in carbohydrate biosynthesis; 3-deoxy-D-manno-octulosonate biosynthesis; 3-deoxy-D-manno-octulosonate from D-ribulose 5-phosphate: step 2/3. It functions in the pathway bacterial outer membrane biogenesis; lipopolysaccharide biosynthesis. This Psychromonas ingrahamii (strain DSM 17664 / CCUG 51855 / 37) protein is 2-dehydro-3-deoxyphosphooctonate aldolase.